A 1346-amino-acid chain; its full sequence is Toll-like receptor Tollo (1346 aa).

The signal sequence occupies residues 1–21; sequence MLATTHMLYVLIATCVIPIFG. Topologically, residues 22-1021 are extracellular; that stretch reads AALSKTVLYQ…NQPPKLDYIP (1000 aa). N-linked (GlcNAc...) asparagine glycans are attached at residues Asn-63, Asn-112, and Asn-126. 23 LRR repeats span residues 97–120, 124–146, 151–174, 176–198, 209–232, 234–256, 257–280, 282–304, 306–330, 331–354, 355–378, 380–402, 404–426, 427–450, 452–473, 474–497, 498–521, 523–544, 546–568, 570–591, 593–614, 615–637, and 638–661; these read LVEL…SFRG, LRNL…MASN, FRQL…MVCP, KSLQ…YFSA, GSTL…MLSA, GRLT…AFEG, LLSL…LFAE, KQLQ…IFGE, AELL…TFVG, LKRL…IFRP, LASL…IFAD, TNLH…TLQG, KNLL…SLVN, CSQL…LAHV, LLKT…SITQ, LESL…VFDR, MSSL…SLQR, SQLQ…LFTE, PNLV…HIPI, LQWL…EIES, LSLS…SSIP, NSVE…TFFK, and KPNL…ALRL. Asn-182 is a glycosylation site (N-linked (GlcNAc...) asparagine). An N-linked (GlcNAc...) asparagine glycan is attached at Asn-291. Asn-426 is a glycosylation site (N-linked (GlcNAc...) asparagine). Asn-468 is a glycosylation site (N-linked (GlcNAc...) asparagine). Residue Asn-505 is glycosylated (N-linked (GlcNAc...) asparagine). N-linked (GlcNAc...) asparagine glycosylation is present at Asn-552. Asn-640 carries N-linked (GlcNAc...) asparagine glycosylation. 4 disulfide bridges follow: Cys-682-Cys-710, Cys-684-Cys-733, Cys-757-Cys-763, and Cys-761-Cys-776. LRR repeat units follow at residues 790–813, 814–837, 838–861, 863–885, 887–909, and 912–938; these read PMDS…AFIG, RKRL…TFYG, LLEL…EFQG, DNLQ…TFTH, YHLK…NFLP, and LNEL…YINR. Residues Asn-823 and Asn-832 are each glycosylated (N-linked (GlcNAc...) asparagine). The cysteines at positions 924 and 950 are disulfide-linked. 2 N-linked (GlcNAc...) asparagine glycosylation sites follow: Asn-956 and Asn-1000. Residues 1022–1042 traverse the membrane as a helical segment; it reads ILVAILTAFIFVMICISLVFI. At 1043–1346 the chain is on the cytoplasmic side; that stretch reads FRQEMRVWCH…PTPASRNLHM (304 aa). The region spanning 1074–1209 is the TIR domain; that stretch reads KLFDAFVSYS…LFWQKLRFAL (136 aa). The disordered stretch occupies residues 1235-1346; sequence HHHHHVHQQA…PTPASRNLHM (112 aa). The span at 1267–1300 shows a compositional bias: low complexity; sequence PGSFRRQPSLHQQQQQQQQIRGNNNTTQQQQQQQ.

The protein belongs to the Toll-like receptor family. May interact (via the extracellular domain) with 18w (via the extracellular domain).

The protein resides in the cell membrane. The protein localises to the apical cell membrane. Toll-related receptor. Probably specific to larval innate immunity. Involved in the tracheal immune response of larvae to Gram-negative and perhaps Gram-positive bacteria; upon infection it negatively regulates the immune deficiency (Imd) signaling cascade specifically in the respiratory epithelium to prevent the overexpression of antimicrobial peptides (AMP). Involved in the NF-kappa-B-dependent apoptosis of unfit cells during cell competition. Involved in neuron-specific glycosylation. Positively controls the neuromuscular junction (NMJ) growth in presynaptic motorneurons, probably via the JNK pathway. During development of the peripheral nervous system, may function in the NF-kappa-B (rel) regulatory cascade to repress expression of the neuron-specific genes sc and ase in non-neuronal cells. Promotes heterophilic cell adhesion with 18w in vitro. May have a minor role in leg development. May be involved in determining the proximal cell fate in the wing, possibly by negatively regulating the Dpp signaling pathway. May also be involved in the Dpp signaling pathway in the eye. Possibly functions with 18w and Toll-6 during convergent extension, to help direct proper planar cell polarity, cell intercalation and axis elongation. In Drosophila melanogaster (Fruit fly), this protein is Toll-like receptor Tollo.